The following is a 657-amino-acid chain: Pentatricopeptide repeat-containing protein At2g37310 (657 aa).

15 PPR repeats span residues D21–P55, D56–R86, N87–S121, D128–S165, D166–R196, D197–P232, N233–M267, D268–K298, D299–T333, W334–P364, N365–N399, N400–R430, S431–P465, D466–P501, and G502–K536. The type E motif stretch occupies residues V537–E612. Residues K613 to S643 are type E(+) motif.

It belongs to the PPR family. PCMP-E subfamily.

In Arabidopsis thaliana (Mouse-ear cress), this protein is Pentatricopeptide repeat-containing protein At2g37310 (PCMP-E49).